Here is a 1370-residue protein sequence, read N- to C-terminus: DNA-directed RNA polymerase subunit beta (1370 aa).

It belongs to the RNA polymerase beta chain family. As to quaternary structure, the RNAP catalytic core consists of 2 alpha, 1 beta, 1 beta' and 1 omega subunit. When a sigma factor is associated with the core the holoenzyme is formed, which can initiate transcription.

The catalysed reaction is RNA(n) + a ribonucleoside 5'-triphosphate = RNA(n+1) + diphosphate. Functionally, DNA-dependent RNA polymerase catalyzes the transcription of DNA into RNA using the four ribonucleoside triphosphates as substrates. The sequence is that of DNA-directed RNA polymerase subunit beta from Geotalea daltonii (strain DSM 22248 / JCM 15807 / FRC-32) (Geobacter daltonii).